The sequence spans 474 residues: ATP synthase subunit beta, chloroplastic (474 aa).

155 to 162 (GGAGVGKT) serves as a coordination point for ATP.

This sequence belongs to the ATPase alpha/beta chains family. As to quaternary structure, F-type ATPases have 2 components, CF(1) - the catalytic core - and CF(0) - the membrane proton channel. CF(1) has five subunits: alpha(3), beta(3), gamma(1), delta(1), epsilon(1). CF(0) has four main subunits: a(1), b(1), b'(1) and c(9-12).

The protein resides in the plastid. Its subcellular location is the chloroplast thylakoid membrane. It carries out the reaction ATP + H2O + 4 H(+)(in) = ADP + phosphate + 5 H(+)(out). Functionally, produces ATP from ADP in the presence of a proton gradient across the membrane. The catalytic sites are hosted primarily by the beta subunits. This chain is ATP synthase subunit beta, chloroplastic, found in Thalassiosira pseudonana (Marine diatom).